The primary structure comprises 313 residues: Protoheme IX farnesyltransferase (313 aa).

The next 8 membrane-spanning stretches (helical) occupy residues Val-34–Val-54, Pro-56–Leu-76, His-105–Thr-125, Leu-128–Leu-148, Thr-152–Ser-172, Ala-173–Thr-193, Val-237–Leu-257, and Tyr-291–Leu-311.

It belongs to the UbiA prenyltransferase family. Protoheme IX farnesyltransferase subfamily.

It localises to the cell membrane. The enzyme catalyses heme b + (2E,6E)-farnesyl diphosphate + H2O = Fe(II)-heme o + diphosphate. Its pathway is porphyrin-containing compound metabolism; heme O biosynthesis; heme O from protoheme: step 1/1. Converts heme B (protoheme IX) to heme O by substitution of the vinyl group on carbon 2 of heme B porphyrin ring with a hydroxyethyl farnesyl side group. This is Protoheme IX farnesyltransferase from Mycolicibacterium gilvum (strain PYR-GCK) (Mycobacterium gilvum (strain PYR-GCK)).